Consider the following 369-residue polypeptide: Phospho-N-acetylmuramoyl-pentapeptide-transferase (369 aa).

Helical transmembrane passes span 2 to 22 (IALLIGAGVALLVALIGTPLF), 55 to 75 (TVVVAAVLISYFVTHLIMWMM), 86 to 106 (GLLLLFLMVGMGFVGFLDDFI), 120 to 140 (AKLILQAAVGIIFAVLVLQFP), 163 to 183 (LAFGGTVVGAILFVLWSNLII), 196 to 216 (LDGLAAGASIMVFGAYTIMGI), 239 to 259 (PMDLALLAAILSAALVGFLWW), 266 to 286 (IFMGDTGSLAIGGAVAAFAIL), 291 to 311 (LLLAFIGGLFVLITLSVIIQV), and 348 to 368 (ILAGLFVAAGLGIFYAEWVVL).

The protein belongs to the glycosyltransferase 4 family. MraY subfamily. It depends on Mg(2+) as a cofactor.

It is found in the cell membrane. It catalyses the reaction UDP-N-acetyl-alpha-D-muramoyl-L-alanyl-gamma-D-glutamyl-meso-2,6-diaminopimeloyl-D-alanyl-D-alanine + di-trans,octa-cis-undecaprenyl phosphate = di-trans,octa-cis-undecaprenyl diphospho-N-acetyl-alpha-D-muramoyl-L-alanyl-D-glutamyl-meso-2,6-diaminopimeloyl-D-alanyl-D-alanine + UMP. It participates in cell wall biogenesis; peptidoglycan biosynthesis. Catalyzes the initial step of the lipid cycle reactions in the biosynthesis of the cell wall peptidoglycan: transfers peptidoglycan precursor phospho-MurNAc-pentapeptide from UDP-MurNAc-pentapeptide onto the lipid carrier undecaprenyl phosphate, yielding undecaprenyl-pyrophosphoryl-MurNAc-pentapeptide, known as lipid I. The chain is Phospho-N-acetylmuramoyl-pentapeptide-transferase from Paenarthrobacter aurescens (strain TC1).